Reading from the N-terminus, the 552-residue chain is Beta-hexosaminidase A (552 aa).

The signal sequence occupies residues 1–15 (MRLIVLSLLFTSTLA). A glycan (N-linked (GlcNAc...) asparagine) is linked at Asn-44. The active-site Proton donor is Glu-322. N-linked (GlcNAc...) asparagine glycosylation is found at Asn-348, Asn-409, and Asn-457.

Belongs to the glycosyl hydrolase 20 family.

It localises to the lysosome. The enzyme catalyses Hydrolysis of terminal non-reducing N-acetyl-D-hexosamine residues in N-acetyl-beta-D-hexosaminides.. In terms of biological role, responsible for the degradation of GM2 gangliosides, and a variety of other molecules containing terminal N-acetyl hexosamines. Degrades chitotriose. The protein is Beta-hexosaminidase A of Caenorhabditis briggsae.